Here is a 387-residue protein sequence, read N- to C-terminus: Eukaryotic translation initiation factor 3 subunit M (387 aa).

The region spanning 181–340 (LSSKVMIELL…RKVHISSTMH (160 aa)) is the PCI domain.

It belongs to the eIF-3 subunit M family. As to quaternary structure, component of the eukaryotic translation initiation factor 3 (eIF-3) complex. The eIF-3 complex interacts with pix.

The protein localises to the cytoplasm. The protein resides in the golgi apparatus. Functionally, component of the eukaryotic translation initiation factor 3 (eIF-3) complex, which is involved in protein synthesis of a specialized repertoire of mRNAs and, together with other initiation factors, stimulates binding of mRNA and methionyl-tRNAi to the 40S ribosome. The eIF-3 complex specifically targets and initiates translation of a subset of mRNAs involved in cell proliferation. This chain is Eukaryotic translation initiation factor 3 subunit M, found in Drosophila grimshawi (Hawaiian fruit fly).